The primary structure comprises 552 residues: Elongator complex protein 3 (552 aa).

Positions arginine 84–proline 374 constitute a Radical SAM core domain. [4Fe-4S] cluster is bound by residues cysteine 101, cysteine 111, and cysteine 114. Acetyl-CoA-binding positions include lysine 166, glutamate 476–valine 479, phenylalanine 499–methionine 501, and tyrosine 532. The N-acetyltransferase domain maps to threonine 398–asparagine 552.

The protein belongs to the ELP3 family. Component of the elongator complex composed of Elp1, Elp2, Elp3, Elp4, Elp5 and Elp6. The elongator complex associates with and stabilizes microtubules; efficient interaction requires the full complex. It depends on [4Fe-4S] cluster as a cofactor.

The protein resides in the cytoplasm. Its subcellular location is the nucleus. It localises to the cytoskeleton. It is found in the spindle. The catalysed reaction is uridine(34) in tRNA + acetyl-CoA + S-adenosyl-L-methionine + H2O = 5-(carboxymethyl)uridine(34) in tRNA + 5'-deoxyadenosine + L-methionine + CoA + 2 H(+). It participates in tRNA modification; 5-methoxycarbonylmethyl-2-thiouridine-tRNA biosynthesis. Catalytic tRNA acetyltransferase subunit of the elongator complex, which is required for multiple tRNA modifications, including mcm5U (5-methoxycarbonylmethyl uridine), mcm5s2U (5-methoxycarbonylmethyl-2-thiouridine), and ncm5U (5-carbamoylmethyl uridine). In the elongator complex, acts as a tRNA uridine(34) acetyltransferase by mediating formation of carboxymethyluridine in the wobble base at position 34 in tRNAs. Binding by the elongator complex stabilizes microtubules and promotes their growth. This induces central spindle asymmetry, promoting polarized signaling endosome trafficking during asymmetric cell division and cell fate assignation of sensory organ precursor cells. Plays a role in the control of synaptic bouton expansion. Required for larval development. Involved in protein synthesis-dependent long-term memory formation, probably as part of the elongator complex. This Drosophila melanogaster (Fruit fly) protein is Elongator complex protein 3.